Here is a 578-residue protein sequence, read N- to C-terminus: Proline--tRNA ligase (578 aa).

It belongs to the class-II aminoacyl-tRNA synthetase family. ProS type 1 subfamily. As to quaternary structure, homodimer.

The protein resides in the cytoplasm. It catalyses the reaction tRNA(Pro) + L-proline + ATP = L-prolyl-tRNA(Pro) + AMP + diphosphate. Its function is as follows. Catalyzes the attachment of proline to tRNA(Pro) in a two-step reaction: proline is first activated by ATP to form Pro-AMP and then transferred to the acceptor end of tRNA(Pro). As ProRS can inadvertently accommodate and process non-cognate amino acids such as alanine and cysteine, to avoid such errors it has two additional distinct editing activities against alanine. One activity is designated as 'pretransfer' editing and involves the tRNA(Pro)-independent hydrolysis of activated Ala-AMP. The other activity is designated 'posttransfer' editing and involves deacylation of mischarged Ala-tRNA(Pro). The misacylated Cys-tRNA(Pro) is not edited by ProRS. This Burkholderia ambifaria (strain ATCC BAA-244 / DSM 16087 / CCUG 44356 / LMG 19182 / AMMD) (Burkholderia cepacia (strain AMMD)) protein is Proline--tRNA ligase.